The chain runs to 21 residues: Cyanophlyctin (21 aa).

As to expression, expressed by the skin glands.

It is found in the secreted. In terms of biological role, has antibacterial activity against E.coli HP101BA (MIC=6.4 uM), K.pneumoniae PTCC1388 (MIC=7.3 uM), M.luteus PTCC1625 (MIC=4.7 uM) and S.aureus PTCC1431 (MIC=5.3 uM). Has no or very limited (&lt;3%) hemolytic activity at concentrations of 15 ug/ml and 60 ug/ml, respectively. In Euphlyctis cyanophlyctis (Skittering frog), this protein is Cyanophlyctin.